Here is a 176-residue protein sequence, read N- to C-terminus: ATP-dependent protease subunit HslV (176 aa).

T2 is an active-site residue. Na(+) contacts are provided by G157, C160, and T163.

This sequence belongs to the peptidase T1B family. HslV subfamily. In terms of assembly, a double ring-shaped homohexamer of HslV is capped on each side by a ring-shaped HslU homohexamer. The assembly of the HslU/HslV complex is dependent on binding of ATP.

It localises to the cytoplasm. The enzyme catalyses ATP-dependent cleavage of peptide bonds with broad specificity.. Its activity is regulated as follows. Allosterically activated by HslU binding. Its function is as follows. Protease subunit of a proteasome-like degradation complex believed to be a general protein degrading machinery. The chain is ATP-dependent protease subunit HslV from Pseudomonas fluorescens (strain SBW25).